The chain runs to 1081 residues: Serine/threonine-protein kinase PKH2 (1081 aa).

The residue at position 138 (Ser138) is a Phosphoserine. One can recognise a Protein kinase domain in the interval 179–443 (FKFGSVIGDG…ISQIKEHHFF (265 aa)). Residues 189 to 191 (AYS) and Lys208 contribute to the ATP site. The segment at 210 to 255 (LNKEYLIRQKKVKYVSIEKTALQKLNNSPSVVRLFSTFQDESSLYF) is PIF-pocket. Residues 258 to 260 (EYA) and Asp264 each bind ATP. Residue Asp303 is the Proton acceptor of the active site. Residues Glu307 and Asp321 each coordinate ATP. Polar residues predominate over residues 494–526 (HLVTQRSASSPSVEETTHSTLYNNNTHASTESE). 3 disordered regions span residues 494–652 (HLVT…TYQM), 805–833 (NRSGEGYKCNQNSSPMKDDDKSESNNKGS), and 970–1017 (IERR…INSA). The span at 527–538 (ISIKKRPTDERT) shows a compositional bias: basic and acidic residues. Composition is skewed to low complexity over residues 564–575 (AASAALAASAAL) and 582–602 (SYPTSSSKSSRSSSPATTSRP). The residue at position 619 (Ser619) is a Phosphoserine. Over residues 632-645 (PMPPYTPPMSPPMT) the composition is skewed to pro residues. Composition is skewed to polar residues over residues 805 to 819 (NRSGEGYKCNQNSSP) and 998 to 1017 (HSQSPSISKHNSFSESINSA). Ser1009 carries the post-translational modification Phosphoserine.

The protein belongs to the protein kinase superfamily. AGC Ser/Thr protein kinase family. PDPK1 subfamily.

It localises to the nucleus. Its subcellular location is the cytoplasm. The protein resides in the cell cortex. The enzyme catalyses L-seryl-[protein] + ATP = O-phospho-L-seryl-[protein] + ADP + H(+). It carries out the reaction L-threonyl-[protein] + ATP = O-phospho-L-threonyl-[protein] + ADP + H(+). Sphingoid base activates kinase activity. Serine/threonine-protein kinase which is part sphingolipid-mediated signaling pathway that is required for the internalization step of endocytosis by regulating eisosome assembly and organization, and modulating the organization of the plasma membrane. Phosphorylates and activates PKC1. Activates YPK1 and YPK2, 2 components of signaling cascade required for maintenance of cell wall integrity. Required for stress-induced P-body assembly and regulates global mRNA decay at the deadenylation step. In Saccharomyces cerevisiae (strain ATCC 204508 / S288c) (Baker's yeast), this protein is Serine/threonine-protein kinase PKH2 (PKH2).